Reading from the N-terminus, the 182-residue chain is Peptide deformylase (182 aa).

Positions 100 and 142 each coordinate Fe cation. The active site involves glutamate 143. Histidine 146 contributes to the Fe cation binding site.

The protein belongs to the polypeptide deformylase family. The cofactor is Fe(2+).

It carries out the reaction N-terminal N-formyl-L-methionyl-[peptide] + H2O = N-terminal L-methionyl-[peptide] + formate. Functionally, removes the formyl group from the N-terminal Met of newly synthesized proteins. Requires at least a dipeptide for an efficient rate of reaction. N-terminal L-methionine is a prerequisite for activity but the enzyme has broad specificity at other positions. This Bartonella bacilliformis (strain ATCC 35685 / KC583 / Herrer 020/F12,63) protein is Peptide deformylase.